Here is a 482-residue protein sequence, read N- to C-terminus: QWRF motif-containing protein 3 (482 aa).

Residues 1–20 show a composition bias toward basic and acidic residues; sequence MKSCEHELLKTRRGKSREVS. Disordered regions lie at residues 1-60 and 171-220; these read MKSC…GLKK and TAKP…QWAL. Low complexity predominate over residues 21–42; that stretch reads SRFLSSPSASSSPNRRNSTSNS. The span at 191 to 219 shows a compositional bias: polar residues; that stretch reads RTNSSKGIENRLQRNNSVSRYGSSMSQWA. A QWRF motif motif is present at residues 292–295; the sequence is QWRF.

It belongs to the QWRF family.

This is QWRF motif-containing protein 3 (QWRF3) from Arabidopsis thaliana (Mouse-ear cress).